We begin with the raw amino-acid sequence, 426 residues long: Gamma-glutamyl phosphate reductase (426 aa).

Belongs to the gamma-glutamyl phosphate reductase family.

Its subcellular location is the cytoplasm. It catalyses the reaction L-glutamate 5-semialdehyde + phosphate + NADP(+) = L-glutamyl 5-phosphate + NADPH + H(+). Its pathway is amino-acid biosynthesis; L-proline biosynthesis; L-glutamate 5-semialdehyde from L-glutamate: step 2/2. Catalyzes the NADPH-dependent reduction of L-glutamate 5-phosphate into L-glutamate 5-semialdehyde and phosphate. The product spontaneously undergoes cyclization to form 1-pyrroline-5-carboxylate. This is Gamma-glutamyl phosphate reductase from Ralstonia nicotianae (strain ATCC BAA-1114 / GMI1000) (Ralstonia solanacearum).